Reading from the N-terminus, the 238-residue chain is Cysteine-rich venom protein pseudechetoxin-like (238 aa).

The N-terminal stretch at 1-19 (MIAFLVLLSLAAVLQQSSG) is a signal peptide. The propeptide occupies 20-28 (TVDFASESS). The region spanning 38–164 (VDKHNDLRRS…STKYLYVCQY (127 aa)) is the SCP domain. 8 cysteine pairs are disulfide-bonded: Cys-75/Cys-153, Cys-92/Cys-165, Cys-148/Cys-162, Cys-184/Cys-191, Cys-187/Cys-196, Cys-200/Cys-233, Cys-209/Cys-227, and Cys-218/Cys-231. Residues 200-233 (CKHNDDLSNCKTLVKKHKCQTEWIKSKCPATCFC) enclose the ShKT domain.

The protein belongs to the CRISP family. In terms of tissue distribution, expressed by the venom gland.

Its subcellular location is the secreted. Its function is as follows. Blocks olfactory (CNGA2) and retinal (CNGA1) CNG channel currents. Does not affect neither depolarization- nor caffeine-induced contraction of smooth muscle. This chain is Cysteine-rich venom protein pseudechetoxin-like, found in Pseudonaja textilis (Eastern brown snake).